The following is a 149-amino-acid chain: Large ribosomal subunit protein uL22c (149 aa).

Belongs to the universal ribosomal protein uL22 family. Part of the 50S ribosomal subunit.

It is found in the plastid. Its subcellular location is the chloroplast. This protein binds specifically to 23S rRNA. Its function is as follows. The globular domain of the protein is located near the polypeptide exit tunnel on the outside of the subunit, while an extended beta-hairpin is found that lines the wall of the exit tunnel in the center of the 70S ribosome. This is Large ribosomal subunit protein uL22c (rpl22) from Hordeum vulgare (Barley).